Consider the following 290-residue polypeptide: Diaminopimelate epimerase (290 aa).

The substrate site is built by asparagine 11 and asparagine 78. The active-site Proton donor is the cysteine 87. Substrate is bound by residues 88–89, asparagine 163, asparagine 199, and 217–218; these read GN and ER. Cysteine 226 acts as the Proton acceptor in catalysis. 227 to 228 lines the substrate pocket; sequence GT.

Belongs to the diaminopimelate epimerase family. As to quaternary structure, homodimer.

It is found in the cytoplasm. It carries out the reaction (2S,6S)-2,6-diaminopimelate = meso-2,6-diaminopimelate. It participates in amino-acid biosynthesis; L-lysine biosynthesis via DAP pathway; DL-2,6-diaminopimelate from LL-2,6-diaminopimelate: step 1/1. Functionally, catalyzes the stereoinversion of LL-2,6-diaminopimelate (L,L-DAP) to meso-diaminopimelate (meso-DAP), a precursor of L-lysine and an essential component of the bacterial peptidoglycan. This Mycobacterium ulcerans (strain Agy99) protein is Diaminopimelate epimerase.